A 637-amino-acid chain; its full sequence is Chaperone protein DnaK (637 aa).

T198 carries the post-translational modification Phosphothreonine; by autocatalysis. The interval 597–637 is disordered; the sequence is MYQQAAQESGQTEGAAQDPKGAAQDDDVVDADFEEVKDHKK. Residues 600–610 are compositionally biased toward polar residues; that stretch reads QAAQESGQTEG. Residues 620–629 show a composition bias toward acidic residues; sequence QDDDVVDADF.

This sequence belongs to the heat shock protein 70 family.

Functionally, acts as a chaperone. This chain is Chaperone protein DnaK, found in Desulforapulum autotrophicum (strain ATCC 43914 / DSM 3382 / VKM B-1955 / HRM2) (Desulfobacterium autotrophicum).